We begin with the raw amino-acid sequence, 401 residues long: E3 ubiquitin-protein ligase RGLG4 (401 aa).

A disordered region spans residues 1-43 (MTMGNFLKRFGSGKSRSSRNMTLGTTSSQSHEPSPSDPSLSLA). The segment covering 8–19 (KRFGSGKSRSSR) has biased composition (low complexity). A compositionally biased stretch (polar residues) spans 20-32 (NMTLGTTSSQSHE). Residues 79–299 (NLILGVDFTK…KETAFALAAL (221 aa)) enclose the VWFA domain. Residues 326-350 (VPRPPPIPYTPPTNAELPSTASPAS) form a disordered region. The span at 327-336 (PRPPPIPYTP) shows a compositional bias: pro residues. The span at 341–350 (ELPSTASPAS) shows a compositional bias: polar residues. The RING-type zinc-finger motif lies at 357–390 (CPICLTNRKDVAFSCGHMTCGDCGSKISNCPICR).

In terms of assembly, interacts with UBC30, GRXS17 and GLB3. As to expression, widely expressed.

Its subcellular location is the cytoplasm. It localises to the nucleus. The enzyme catalyses S-ubiquitinyl-[E2 ubiquitin-conjugating enzyme]-L-cysteine + [acceptor protein]-L-lysine = [E2 ubiquitin-conjugating enzyme]-L-cysteine + N(6)-ubiquitinyl-[acceptor protein]-L-lysine.. In terms of biological role, possesses E3 ubiquitin-protein ligase in vitro. Acts as upstream modulator of jasmonate (JA) signaling in response to various stimuli, such as JA-inhibited root growth, JA-inductive gene expression, coronatine-mediated pathogen susceptibility, wound-stimulated expression of JA-responsive genes and wound-induced JA biosynthesis. Controls fumonisin B1 (FB1)-triggered programmed cell death (PCD) by modulating the JA signaling pathway. May mediate salicylic acid (SA) suppression of JA signaling in FB1-induced responses. May mediate the formation of 'Lys-48'-linked multiubiquitin chains. Mediates the polyubiquitination and subsequent proteasomal degradation of the target protein GRXS17. The sequence is that of E3 ubiquitin-protein ligase RGLG4 from Arabidopsis thaliana (Mouse-ear cress).